The chain runs to 248 residues: tRNA (guanine-N(1)-)-methyltransferase (248 aa).

S-adenosyl-L-methionine is bound by residues glycine 113 and 133 to 138 (IGDYVL).

This sequence belongs to the RNA methyltransferase TrmD family. In terms of assembly, homodimer.

The protein resides in the cytoplasm. It carries out the reaction guanosine(37) in tRNA + S-adenosyl-L-methionine = N(1)-methylguanosine(37) in tRNA + S-adenosyl-L-homocysteine + H(+). Functionally, specifically methylates guanosine-37 in various tRNAs. The polypeptide is tRNA (guanine-N(1)-)-methyltransferase (Shewanella loihica (strain ATCC BAA-1088 / PV-4)).